Here is a 511-residue protein sequence, read N- to C-terminus: Cysteine--tRNA ligase 2, cytoplasmic (511 aa).

Cys34 is a Zn(2+) binding site. The 'HIGH' region signature appears at 36–46; it reads ITAYDFSHIGH. The Zn(2+) site is built by Cys214, His239, and Glu243. Positions 271–275 match the 'KMSKS' region motif; the sequence is KMAKS. ATP is bound at residue Lys274. TPR repeat units lie at residues 315–348 and 368–401; these read ESSS…DGGK and SKML…LKKM.

Belongs to the class-I aminoacyl-tRNA synthetase family. The cofactor is Zn(2+).

It is found in the cytoplasm. It localises to the cytosol. The catalysed reaction is tRNA(Cys) + L-cysteine + ATP = L-cysteinyl-tRNA(Cys) + AMP + diphosphate. The sequence is that of Cysteine--tRNA ligase 2, cytoplasmic from Arabidopsis thaliana (Mouse-ear cress).